The following is a 500-amino-acid chain: Maturase K (500 aa).

This sequence belongs to the intron maturase 2 family. MatK subfamily.

The protein localises to the plastid. It localises to the chloroplast. Its function is as follows. Usually encoded in the trnK tRNA gene intron. Probably assists in splicing its own and other chloroplast group II introns. This chain is Maturase K, found in Fragaria vesca (Woodland strawberry).